A 257-amino-acid chain; its full sequence is Ribosome maturation factor RimP (257 aa).

The tract at residues 182 to 257 (LRRGGPPAAD…SRLKDRDSLH (76 aa)) is disordered. Acidic residues predominate over residues 191–205 (DEADEAEEAEDEEVA). The span at 224–236 (KASPAAKPQKQAR) shows a compositional bias: low complexity.

Belongs to the RimP family.

It localises to the cytoplasm. In terms of biological role, required for maturation of 30S ribosomal subunits. The protein is Ribosome maturation factor RimP of Methylobacterium radiotolerans (strain ATCC 27329 / DSM 1819 / JCM 2831 / NBRC 15690 / NCIMB 10815 / 0-1).